The chain runs to 540 residues: MNSTGHLQDAPNATSLHVPHSQEGNSTSLQEGLQDLIHTATLVTCTFLLAVIFCLGSYGNFIVFLSFFDPAFRKFRTNFDFMILNLSFCDLFICGVTAPMFTFVLFFSSASSIPDAFCFTFHLTSSGFIIMSLKTVAVIALHRLRMVLGKQPNRTASFPCTVLLTLLLWATSFTLATLATLKTSKSHLCLPMSSLIAGKGKAILSLYVVDFTFCVAVVSVSYIMIAQTLRKNAQVRKCPPVITVDASRPQPFMGVPVQGGGDPIQCAMPALYRNQNYNKLQHVQTRGYTKSPNQLVTPAASRLQLVSAINLSTAKDSKAVVTCVIIVLSVLVCCLPLGISLVQVVLSSNGSFILYQFELFGFTLIFFKSGLNPFIYSRNSAGLRRKVLWCLQYIGLGFFCCKQKTRLRAMGKGNLEVNRNKSSHHETNSAYMLSPKPQKKFVDQACGPSHSKESMVSPKISAGHQHCGQSSSTPINTRIEPYYSIYNSSPSQEESSPCNLQPVNSFGFANSYIAMHYHTTNDLVQEYDSTSAKQIPVPSV.

Residues 1–15 show a composition bias toward polar residues; that stretch reads MNSTGHLQDAPNATS. A disordered region spans residues 1-27; that stretch reads MNSTGHLQDAPNATSLHVPHSQEGNST. Topologically, residues 1–46 are extracellular; it reads MNSTGHLQDAPNATSLHVPHSQEGNSTSLQEGLQDLIHTATLVTCT. Residues Asn-2, Asn-12, and Asn-25 are each glycosylated (N-linked (GlcNAc...) asparagine). Residues 47–67 form a helical membrane-spanning segment; that stretch reads FLLAVIFCLGSYGNFIVFLSF. The Cytoplasmic segment spans residues 68 to 86; the sequence is FDPAFRKFRTNFDFMILNL. A helical membrane pass occupies residues 87-107; sequence SFCDLFICGVTAPMFTFVLFF. Over 108 to 120 the chain is Extracellular; sequence SSASSIPDAFCFT. Residues 121 to 141 form a helical membrane-spanning segment; that stretch reads FHLTSSGFIIMSLKTVAVIAL. Residues 142-160 lie on the Cytoplasmic side of the membrane; sequence HRLRMVLGKQPNRTASFPC. A helical membrane pass occupies residues 161–181; it reads TVLLTLLLWATSFTLATLATL. At 182–205 the chain is on the extracellular side; the sequence is KTSKSHLCLPMSSLIAGKGKAILS. The chain crosses the membrane as a helical span at residues 206–226; the sequence is LYVVDFTFCVAVVSVSYIMIA. Over 227-318 the chain is Cytoplasmic; the sequence is QTLRKNAQVR…INLSTAKDSK (92 aa). A helical transmembrane segment spans residues 319–339; the sequence is AVVTCVIIVLSVLVCCLPLGI. Topologically, residues 340-350 are extracellular; it reads SLVQVVLSSNG. A helical membrane pass occupies residues 351-371; the sequence is SFILYQFELFGFTLIFFKSGL. Residues 372–540 lie on the Cytoplasmic side of the membrane; sequence NPFIYSRNSA…SAKQIPVPSV (169 aa).

The protein belongs to the G-protein coupled receptor 1 family. In terms of tissue distribution, expressed at high levels in brain and spinal cord and at detectable levels in retinal pigment epithelium. In situ hybridization of adult eye sections localized transcripts only to the perivascular cells, surrounding retinal arterioles, in the ganglion cell/nerve fiber layer. Also expressed by islet cells (at protein level).

Its subcellular location is the cell membrane. In terms of biological role, g protein-coupled receptor that is activated by the chemokine CCL5/RANTES. Probably coupled to heterotrimeric Gq proteins, it stimulates inositol trisphosphate production and calcium mobilization upon activation. Together with CCL5/RANTES, may play a role in neuron survival through activation of a downstream signaling pathway involving the PI3, Akt and MAP kinases. CCL5/RANTES may also regulate insulin secretion by pancreatic islet cells through activation of this receptor. This is Probable G-protein coupled receptor 75 (GPR75) from Homo sapiens (Human).